Reading from the N-terminus, the 61-residue chain is DNA-directed RNA polymerase subunit Rpo6 (61 aa).

Belongs to the archaeal Rpo6/eukaryotic RPB6 RNA polymerase subunit family. Part of the RNA polymerase complex.

The protein localises to the cytoplasm. The enzyme catalyses RNA(n) + a ribonucleoside 5'-triphosphate = RNA(n+1) + diphosphate. Functionally, DNA-dependent RNA polymerase (RNAP) catalyzes the transcription of DNA into RNA using the four ribonucleoside triphosphates as substrates. The polypeptide is DNA-directed RNA polymerase subunit Rpo6 (Thermoplasma volcanium (strain ATCC 51530 / DSM 4299 / JCM 9571 / NBRC 15438 / GSS1)).